Here is a 204-residue protein sequence, read N- to C-terminus: Holliday junction branch migration complex subunit RuvA (204 aa).

The interval 1-64 (MIAQLKGSLA…EDAFLLYGFH (64 aa)) is domain I. A domain II region spans residues 65–143 (SESQRKVFNL…ALPMAAPTTA (79 aa)). A flexible linker region spans residues 144 to 154 (IGAATMAANPA). The interval 154-204 (AGLREEVASALLNLGYKPPQVDAALAKLFSAGEITDISVALKGALKLLAPA) is domain III.

This sequence belongs to the RuvA family. In terms of assembly, homotetramer. Forms an RuvA(8)-RuvB(12)-Holliday junction (HJ) complex. HJ DNA is sandwiched between 2 RuvA tetramers; dsDNA enters through RuvA and exits via RuvB. An RuvB hexamer assembles on each DNA strand where it exits the tetramer. Each RuvB hexamer is contacted by two RuvA subunits (via domain III) on 2 adjacent RuvB subunits; this complex drives branch migration. In the full resolvosome a probable DNA-RuvA(4)-RuvB(12)-RuvC(2) complex forms which resolves the HJ.

The protein localises to the cytoplasm. Functionally, the RuvA-RuvB-RuvC complex processes Holliday junction (HJ) DNA during genetic recombination and DNA repair, while the RuvA-RuvB complex plays an important role in the rescue of blocked DNA replication forks via replication fork reversal (RFR). RuvA specifically binds to HJ cruciform DNA, conferring on it an open structure. The RuvB hexamer acts as an ATP-dependent pump, pulling dsDNA into and through the RuvAB complex. HJ branch migration allows RuvC to scan DNA until it finds its consensus sequence, where it cleaves and resolves the cruciform DNA. This chain is Holliday junction branch migration complex subunit RuvA, found in Magnetococcus marinus (strain ATCC BAA-1437 / JCM 17883 / MC-1).